Reading from the N-terminus, the 465-residue chain is Ribulose bisphosphate carboxylase large chain (465 aa).

K4 carries the N6,N6,N6-trimethyllysine modification. 2 residues coordinate substrate: N113 and T163. K165 functions as the Proton acceptor in the catalytic mechanism. Position 167 (K167) interacts with substrate. Mg(2+)-binding residues include K191, D193, and E194. Residue K191 is modified to N6-carboxylysine. The active-site Proton acceptor is H284. Substrate contacts are provided by R285, H317, and S369.

The protein belongs to the RuBisCO large chain family. Type I subfamily. In terms of assembly, heterohexadecamer of 8 large chains and 8 small chains; disulfide-linked. The disulfide link is formed within the large subunit homodimers. Requires Mg(2+) as cofactor. In terms of processing, the disulfide bond which can form in the large chain dimeric partners within the hexadecamer appears to be associated with oxidative stress and protein turnover.

The protein resides in the plastid. Its subcellular location is the chloroplast. It catalyses the reaction 2 (2R)-3-phosphoglycerate + 2 H(+) = D-ribulose 1,5-bisphosphate + CO2 + H2O. It carries out the reaction D-ribulose 1,5-bisphosphate + O2 = 2-phosphoglycolate + (2R)-3-phosphoglycerate + 2 H(+). RuBisCO catalyzes two reactions: the carboxylation of D-ribulose 1,5-bisphosphate, the primary event in carbon dioxide fixation, as well as the oxidative fragmentation of the pentose substrate in the photorespiration process. Both reactions occur simultaneously and in competition at the same active site. This chain is Ribulose bisphosphate carboxylase large chain, found in Manilkara zapota (Sapodilla plum).